Consider the following 306-residue polypeptide: Pantothenate kinase (306 aa).

91–98 lines the ATP pocket; that stretch reads GSVAVGKS.

Belongs to the prokaryotic pantothenate kinase family.

The protein localises to the cytoplasm. The catalysed reaction is (R)-pantothenate + ATP = (R)-4'-phosphopantothenate + ADP + H(+). It participates in cofactor biosynthesis; coenzyme A biosynthesis; CoA from (R)-pantothenate: step 1/5. This Streptococcus pyogenes serotype M12 (strain MGAS2096) protein is Pantothenate kinase.